The sequence spans 67 residues: Large ribosomal subunit protein bL35 (67 aa).

A compositionally biased stretch (basic residues) spans 1–16; the sequence is MPKMKTKSGAKKRFRV. The disordered stretch occupies residues 1 to 25; the sequence is MPKMKTKSGAKKRFRVRPGGTVKRG.

Belongs to the bacterial ribosomal protein bL35 family.

This chain is Large ribosomal subunit protein bL35, found in Polaromonas sp. (strain JS666 / ATCC BAA-500).